The primary structure comprises 404 residues: Metacaspase-1A (404 aa).

A compositionally biased stretch (basic residues) spans 1–10 (MNPHHSHHHS). Residues 1 to 100 (MNPHHSHHHS…PSDPVSFGQG (100 aa)) are disordered. The span at 24–51 (QQQPPSNPYQYNQPSPQPYQGSQPPQNG) shows a compositional bias: low complexity. Residues histidine 200 and cysteine 256 contribute to the active site.

It belongs to the peptidase C14B family.

Functionally, involved in cell death (apoptosis). The sequence is that of Metacaspase-1A (casA) from Aspergillus niger (strain ATCC MYA-4892 / CBS 513.88 / FGSC A1513).